Consider the following 163-residue polypeptide: 3-isopropylmalate dehydratase small subunit (163 aa).

The protein belongs to the LeuD family. LeuD type 2 subfamily. Heterodimer of LeuC and LeuD.

The enzyme catalyses (2R,3S)-3-isopropylmalate = (2S)-2-isopropylmalate. It participates in amino-acid biosynthesis; L-leucine biosynthesis; L-leucine from 3-methyl-2-oxobutanoate: step 2/4. Catalyzes the isomerization between 2-isopropylmalate and 3-isopropylmalate, via the formation of 2-isopropylmaleate. The polypeptide is 3-isopropylmalate dehydratase small subunit (Endomicrobium trichonymphae).